Here is a 112-residue protein sequence, read N- to C-terminus: MKKRFISVCAIAIALLVSLTPAALAADLANGAKVFSGNCAACHMGGGNVVMANKTLKKEALEQFGMYSEDAIIYQVQHGKNAMPAFAGRLTDEQIQDVAAYVLDQAAKGWAG.

The N-terminal stretch at 1 to 25 (MKKRFISVCAIAIALLVSLTPAALA) is a signal peptide. Residues cysteine 39, cysteine 42, histidine 43, and methionine 83 each coordinate heme c.

Belongs to the cytochrome c family. PetJ subfamily. As to quaternary structure, monomer. Post-translationally, binds 1 heme c group covalently per subunit.

Its subcellular location is the cellular thylakoid lumen. In terms of biological role, functions as an electron carrier between membrane-bound cytochrome b6-f and photosystem I in oxygenic photosynthesis. In Thermosynechococcus vestitus (strain NIES-2133 / IAM M-273 / BP-1), this protein is Cytochrome c6 (petJ).